The primary structure comprises 442 residues: Pentatricopeptide repeat-containing protein At2g27800, mitochondrial (442 aa).

A mitochondrion-targeting transit peptide spans 1-67 (MSATRSTFLG…SFLPSIHVRF (67 aa)). PPR repeat units lie at residues 206 to 236 (NENL…MVTS), 244 to 286 (TIRT…GIEP), 287 to 322 (DVFA…DCEP), 323 to 357 (NSFT…GFVP), 358 to 392 (NGKS…GRVV), and 393 to 427 (DFIS…QLVD).

This sequence belongs to the PPR family. P subfamily.

It localises to the mitochondrion. The sequence is that of Pentatricopeptide repeat-containing protein At2g27800, mitochondrial from Arabidopsis thaliana (Mouse-ear cress).